Reading from the N-terminus, the 976-residue chain is Ephrin type-B receptor 4b (976 aa).

A signal peptide spans 1–23; that stretch reads MDRVCWIMALSWFWMVSTGLVSA. Residues 24–541 are Extracellular-facing; sequence EEEVLMNTKL…ESPSRLMLTG (518 aa). Residues 25 to 204 enclose the Eph LBD domain; that stretch reads EEVLMNTKLE…FFKKCPAVSR (180 aa). Disulfide bonds link cysteine 69–cysteine 186 and cysteine 103–cysteine 113. 2 Fibronectin type-III domains span residues 326-434 and 438-529; these read PPSA…TSRD and PVSG…TLPD. A helical transmembrane segment spans residues 542 to 562; it reads VLVAIGLLILIAVVIVAVFCF. The Cytoplasmic portion of the chain corresponds to 563-976; it reads RRSTRRRDPD…LRIHGGSLRY (414 aa). Residues 613 to 897 enclose the Protein kinase domain; sequence VKIEEVIGAG…IPDGPSHPLL (285 aa). ATP contacts are provided by residues 619–627 and lysine 645; that span reads IGAGEFGEV. Aspartate 738 serves as the catalytic Proton acceptor. The region spanning 906–970 is the SAM domain; the sequence is SHCSSVADWL…LSSVQTLRIH (65 aa).

Belongs to the protein kinase superfamily. Tyr protein kinase family. Ephrin receptor subfamily.

Its subcellular location is the cell membrane. It carries out the reaction L-tyrosyl-[protein] + ATP = O-phospho-L-tyrosyl-[protein] + ADP + H(+). Functionally, receptor tyrosine kinase which binds promiscuously transmembrane ephrin-B family ligands residing on adjacent cells, leading to contact-dependent bidirectional signaling into neighboring cells. The signaling pathway downstream of the receptor is referred to as forward signaling while the signaling pathway downstream of the ephrin ligand is referred to as reverse signaling. Together with its cognate ligand/functional ligand EFNB2 is involved in the regulation of cell adhesion and cell migration, and plays a central role in heart morphogenesis, angiogenesis and blood vessel remodeling and permeability. EPHB4-mediated forward signaling controls cellular repulsion and segregation from EFNB2-expressing cells. Involved in somitogenesis. The chain is Ephrin type-B receptor 4b from Danio rerio (Zebrafish).